Here is a 109-residue protein sequence, read N- to C-terminus: Gliadoralin-A (109 aa).

The signal sequence occupies residues 1-16 (MLVILLMVVVLALSSA). Gln-17 is modified (pyrrolidone carboxylic acid). Residues 17–109 (QDPNRDFVVS…PRYQQPRRAV (93 aa)) form a disordered region. The span at 35–109 (PSSQQGTVGG…PRYQQPRRAV (75 aa)) shows a compositional bias: low complexity. A propeptide spanning residues 107–109 (RAV) is cleaved from the precursor.

Post-translationally, predominantly proteolytically processed at its C-terminus before secretion to produce the major form gliadoralin A 1-90. Further proteloytically processed after secretion to produce minor forms. Potential substrate of transglutaminase. Found in saliva (at protein level). Secreted from the submandibular gland.

The protein localises to the secreted. Its function is as follows. May play a role in the formation of the protective mucosal protein pellicle involved in the reinforcement and protection of oral mucosal epithelial surface. This is Gliadoralin-A from Rattus norvegicus (Rat).